The primary structure comprises 155 residues: Small ribosomal subunit protein uS7cz/uS7cy (155 aa).

It belongs to the universal ribosomal protein uS7 family. As to quaternary structure, part of the 30S ribosomal subunit.

It is found in the plastid. Its subcellular location is the chloroplast. Its function is as follows. One of the primary rRNA binding proteins, it binds directly to 16S rRNA where it nucleates assembly of the head domain of the 30S subunit. The protein is Small ribosomal subunit protein uS7cz/uS7cy (rps7-A) of Nymphaea alba (White water-lily).